The sequence spans 684 residues: Amino-acid acetyltransferase, mitochondrial (684 aa).

The disordered stretch occupies residues 414-439; the sequence is PQDATNSASEPRDPSQLSTVATRRKR. The segment covering 415–434 has biased composition (polar residues); the sequence is QDATNSASEPRDPSQLSTVA. In terms of domain architecture, N-acetyltransferase spans 505 to 674; the sequence is GKSRMTLNDP…YEGVCRGIEP (170 aa).

It belongs to the acetyltransferase family.

It is found in the mitochondrion. The enzyme catalyses L-glutamate + acetyl-CoA = N-acetyl-L-glutamate + CoA + H(+). It participates in amino-acid biosynthesis; L-arginine biosynthesis; N(2)-acetyl-L-ornithine from L-glutamate: step 1/4. In terms of biological role, N-acetylglutamate synthase involved in arginine biosynthesis. This is Amino-acid acetyltransferase, mitochondrial (ARG2) from Ajellomyces capsulatus (strain NAm1 / WU24) (Darling's disease fungus).